A 150-amino-acid chain; its full sequence is 3-hydroxyacyl-[acyl-carrier-protein] dehydratase FabZ (150 aa).

His47 is a catalytic residue.

This sequence belongs to the thioester dehydratase family. FabZ subfamily.

The protein resides in the cytoplasm. It catalyses the reaction a (3R)-hydroxyacyl-[ACP] = a (2E)-enoyl-[ACP] + H2O. In terms of biological role, involved in unsaturated fatty acids biosynthesis. Catalyzes the dehydration of short chain beta-hydroxyacyl-ACPs and long chain saturated and unsaturated beta-hydroxyacyl-ACPs. The chain is 3-hydroxyacyl-[acyl-carrier-protein] dehydratase FabZ from Verminephrobacter eiseniae (strain EF01-2).